A 131-amino-acid polypeptide reads, in one-letter code: MNLIQELEKEQFDKLSAGKVIPEFGPGDTVIVNVKVVEGERSRVQAYEGVCIGRSGGGINESFTVRKISYGEGVERVFPLLSPMIDSIKVVRRGKVRRAKLYYLRDLRGKSARIVEKKQDRPAKVVAGAAE.

The protein belongs to the bacterial ribosomal protein bL19 family.

Its function is as follows. This protein is located at the 30S-50S ribosomal subunit interface and may play a role in the structure and function of the aminoacyl-tRNA binding site. This chain is Large ribosomal subunit protein bL19, found in Rhodopseudomonas palustris (strain BisB18).